A 450-amino-acid chain; its full sequence is Ribulose bisphosphate carboxylase large chain (450 aa).

Lysine 4 is subject to N6,N6,N6-trimethyllysine. 2 residues coordinate substrate: asparagine 113 and threonine 163. Lysine 165 (proton acceptor) is an active-site residue. Lysine 167 lines the substrate pocket. Positions 191, 193, and 194 each coordinate Mg(2+). The residue at position 191 (lysine 191) is an N6-carboxylysine. Histidine 284 acts as the Proton acceptor in catalysis. Positions 285, 317, and 369 each coordinate substrate.

This sequence belongs to the RuBisCO large chain family. Type I subfamily. As to quaternary structure, heterohexadecamer of 8 large chains and 8 small chains; disulfide-linked. The disulfide link is formed within the large subunit homodimers. Requires Mg(2+) as cofactor. Post-translationally, the disulfide bond which can form in the large chain dimeric partners within the hexadecamer appears to be associated with oxidative stress and protein turnover.

It localises to the plastid. The protein resides in the chloroplast. The catalysed reaction is 2 (2R)-3-phosphoglycerate + 2 H(+) = D-ribulose 1,5-bisphosphate + CO2 + H2O. It catalyses the reaction D-ribulose 1,5-bisphosphate + O2 = 2-phosphoglycolate + (2R)-3-phosphoglycerate + 2 H(+). Functionally, ruBisCO catalyzes two reactions: the carboxylation of D-ribulose 1,5-bisphosphate, the primary event in carbon dioxide fixation, as well as the oxidative fragmentation of the pentose substrate in the photorespiration process. Both reactions occur simultaneously and in competition at the same active site. The polypeptide is Ribulose bisphosphate carboxylase large chain (Crassula rupestris subsp. marnieriana (Pygmyweed)).